The chain runs to 666 residues: Kinesin-like protein Nod (666 aa).

Residues 8–320 form the Kinesin motor domain; the sequence is AVRIAVREAP…LRFGTSAKKL (313 aa). 87–94 is a binding site for ATP; the sequence is GQTGTGKS. Residues 423-450 are disordered; sequence GFHSDSDKDRHLMPPPTGQEPRQASSQN. Residues 639–666 adopt a coiled-coil conformation; the sequence is ENLFQVKSLPIWSGNKWERFCQINCLDT.

Belongs to the TRAFAC class myosin-kinesin ATPase superfamily. Kinesin family. In terms of tissue distribution, in adult female, found in meiotically active ovaries.

The protein resides in the cytoplasm. Its subcellular location is the cytoskeleton. Functionally, required for the distributive chromosome segregation of non-exchange chromosomes during meiosis. May be a microtubule motor required to hold distributively 'paired' chromosomes at the metaphase plate until anaphase. The chain is Kinesin-like protein Nod (nod) from Drosophila melanogaster (Fruit fly).